We begin with the raw amino-acid sequence, 391 residues long: Succinyl-diaminopimelate desuccinylase (391 aa).

H78 contacts Zn(2+). D80 is an active-site residue. Position 111 (D111) interacts with Zn(2+). Catalysis depends on E145, which acts as the Proton acceptor. The Zn(2+) site is built by E146, E174, and H360.

Belongs to the peptidase M20A family. DapE subfamily. As to quaternary structure, homodimer. The cofactor is Zn(2+). Requires Co(2+) as cofactor.

It catalyses the reaction N-succinyl-(2S,6S)-2,6-diaminopimelate + H2O = (2S,6S)-2,6-diaminopimelate + succinate. The protein operates within amino-acid biosynthesis; L-lysine biosynthesis via DAP pathway; LL-2,6-diaminopimelate from (S)-tetrahydrodipicolinate (succinylase route): step 3/3. Catalyzes the hydrolysis of N-succinyl-L,L-diaminopimelic acid (SDAP), forming succinate and LL-2,6-diaminopimelate (DAP), an intermediate involved in the bacterial biosynthesis of lysine and meso-diaminopimelic acid, an essential component of bacterial cell walls. The polypeptide is Succinyl-diaminopimelate desuccinylase (Acidovorax ebreus (strain TPSY) (Diaphorobacter sp. (strain TPSY))).